Here is an 88-residue protein sequence, read N- to C-terminus: Small ribosomal subunit protein bS16 (88 aa).

It belongs to the bacterial ribosomal protein bS16 family.

This is Small ribosomal subunit protein bS16 from Baumannia cicadellinicola subsp. Homalodisca coagulata.